Reading from the N-terminus, the 158-residue chain is NAD(P)H-quinone oxidoreductase subunit J, chloroplastic (158 aa).

This sequence belongs to the complex I 30 kDa subunit family. NDH is composed of at least 16 different subunits, 5 of which are encoded in the nucleus.

The protein resides in the plastid. It is found in the chloroplast thylakoid membrane. The catalysed reaction is a plastoquinone + NADH + (n+1) H(+)(in) = a plastoquinol + NAD(+) + n H(+)(out). It catalyses the reaction a plastoquinone + NADPH + (n+1) H(+)(in) = a plastoquinol + NADP(+) + n H(+)(out). In terms of biological role, NDH shuttles electrons from NAD(P)H:plastoquinone, via FMN and iron-sulfur (Fe-S) centers, to quinones in the photosynthetic chain and possibly in a chloroplast respiratory chain. The immediate electron acceptor for the enzyme in this species is believed to be plastoquinone. Couples the redox reaction to proton translocation, and thus conserves the redox energy in a proton gradient. The sequence is that of NAD(P)H-quinone oxidoreductase subunit J, chloroplastic from Cicer arietinum (Chickpea).